Consider the following 123-residue polypeptide: Large ribosomal subunit protein uL14 (123 aa).

It belongs to the universal ribosomal protein uL14 family. As to quaternary structure, part of the 50S ribosomal subunit. Forms a cluster with proteins L3 and L19. In the 70S ribosome, L14 and L19 interact and together make contacts with the 16S rRNA in bridges B5 and B8.

In terms of biological role, binds to 23S rRNA. Forms part of two intersubunit bridges in the 70S ribosome. This chain is Large ribosomal subunit protein uL14, found in Photobacterium profundum (strain SS9).